The chain runs to 258 residues: MTEVVQNVAQTHITVENLNLWYGEKQALKNVSLKIPRNSVTALIGPSGCGKSTFIRCLNRMNDLVKNCRIEGKVLIENEDIYGTDVDVVELRKQVGMVFQKPNPFPMSIYDNVAYGPRIHGVNKKDIDGVVRNALRSAALFEETSDRLKSPALSLSGGQQQRLCIARTLAVKPRIILFDEPTSALDPISTARIEDLIMNLKKDYTIVIVTHNMQQAARISDYTGFFLMGELVEFGQTRQIFHSPREKSTEDYITGRFG.

The ABC transporter domain maps to 13–253 (ITVENLNLWY…PREKSTEDYI (241 aa)). 45–52 (GPSGCGKS) is a binding site for ATP.

This sequence belongs to the ABC transporter superfamily. Phosphate importer (TC 3.A.1.7) family. As to quaternary structure, the complex is composed of two ATP-binding proteins (PstB), two transmembrane proteins (PstC and PstA) and a solute-binding protein (PstS).

It localises to the cell membrane. The catalysed reaction is phosphate(out) + ATP + H2O = ADP + 2 phosphate(in) + H(+). In terms of biological role, part of the ABC transporter complex PstSACB involved in phosphate import. Responsible for energy coupling to the transport system. The sequence is that of Phosphate import ATP-binding protein PstB from Methanosarcina mazei (strain ATCC BAA-159 / DSM 3647 / Goe1 / Go1 / JCM 11833 / OCM 88) (Methanosarcina frisia).